The sequence spans 497 residues: Carboxypeptidase Y homolog ARB_02032 (497 aa).

A signal peptide spans 1-18; that stretch reads MRFTQIVAAALCLGATEA. Residue Asn-88 is glycosylated (N-linked (GlcNAc...) asparagine). Residue Ser-204 is part of the active site. Residues Asn-263 and Asn-393 are each glycosylated (N-linked (GlcNAc...) asparagine). Residue Asp-403 is part of the active site. An N-linked (GlcNAc...) asparagine glycan is attached at Asn-417. His-469 is a catalytic residue.

This sequence belongs to the peptidase S10 family.

It localises to the secreted. It carries out the reaction Release of a C-terminal amino acid with broad specificity.. Its function is as follows. Involved in degradation of small peptides. This Arthroderma benhamiae (strain ATCC MYA-4681 / CBS 112371) (Trichophyton mentagrophytes) protein is Carboxypeptidase Y homolog ARB_02032.